Consider the following 197-residue polypeptide: MISQVRGTIMHRELDRVEIMTASGVAYECLIPLSVFESLPSEGQTVTLHTHLVVREDAWHLYGFAHAYERAVFQKLLHAKGVGPALALGILSALTPDRVVRALHEKDVLTLMRVPRVGRKKAEQIILDLADKIDAVGPAPATGTAPSPLGDDAVRALIALGYNQTEADRAVRAVVESGAPKDVSSLVRGALSRLTAK.

Residues 1-65 form a domain I region; that stretch reads MISQVRGTIM…EDAWHLYGFA (65 aa). Residues 66 to 140 form a domain II region; sequence HAYERAVFQK…DKIDAVGPAP (75 aa). The flexible linker stretch occupies residues 140-144; it reads PATGT. Residues 145–197 are domain III; sequence APSPLGDDAVRALIALGYNQTEADRAVRAVVESGAPKDVSSLVRGALSRLTAK.

It belongs to the RuvA family. In terms of assembly, homotetramer. Forms an RuvA(8)-RuvB(12)-Holliday junction (HJ) complex. HJ DNA is sandwiched between 2 RuvA tetramers; dsDNA enters through RuvA and exits via RuvB. An RuvB hexamer assembles on each DNA strand where it exits the tetramer. Each RuvB hexamer is contacted by two RuvA subunits (via domain III) on 2 adjacent RuvB subunits; this complex drives branch migration. In the full resolvosome a probable DNA-RuvA(4)-RuvB(12)-RuvC(2) complex forms which resolves the HJ.

It localises to the cytoplasm. Its function is as follows. The RuvA-RuvB-RuvC complex processes Holliday junction (HJ) DNA during genetic recombination and DNA repair, while the RuvA-RuvB complex plays an important role in the rescue of blocked DNA replication forks via replication fork reversal (RFR). RuvA specifically binds to HJ cruciform DNA, conferring on it an open structure. The RuvB hexamer acts as an ATP-dependent pump, pulling dsDNA into and through the RuvAB complex. HJ branch migration allows RuvC to scan DNA until it finds its consensus sequence, where it cleaves and resolves the cruciform DNA. This chain is Holliday junction branch migration complex subunit RuvA, found in Gemmatimonas aurantiaca (strain DSM 14586 / JCM 11422 / NBRC 100505 / T-27).